A 163-amino-acid polypeptide reads, in one-letter code: Ribosome maturation factor RimP (163 aa).

It belongs to the RimP family.

The protein resides in the cytoplasm. Required for maturation of 30S ribosomal subunits. The polypeptide is Ribosome maturation factor RimP (Streptococcus thermophilus (strain CNRZ 1066)).